We begin with the raw amino-acid sequence, 892 residues long: Alanine--tRNA ligase (892 aa).

His-574, His-578, Cys-677, and His-681 together coordinate Zn(2+).

Belongs to the class-II aminoacyl-tRNA synthetase family. Zn(2+) serves as cofactor.

The protein localises to the cytoplasm. It catalyses the reaction tRNA(Ala) + L-alanine + ATP = L-alanyl-tRNA(Ala) + AMP + diphosphate. Its function is as follows. Catalyzes the attachment of alanine to tRNA(Ala) in a two-step reaction: alanine is first activated by ATP to form Ala-AMP and then transferred to the acceptor end of tRNA(Ala). Also edits incorrectly charged Ser-tRNA(Ala) and Gly-tRNA(Ala) via its editing domain. In Mesoplasma florum (strain ATCC 33453 / NBRC 100688 / NCTC 11704 / L1) (Acholeplasma florum), this protein is Alanine--tRNA ligase.